Reading from the N-terminus, the 174-residue chain is Ribosome maturation factor RimM (174 aa).

The 75-residue stretch at 97–171 (EGYYYDFDII…RMVIDPIPGL (75 aa)) folds into the PRC barrel domain.

This sequence belongs to the RimM family. Binds ribosomal protein uS19.

It is found in the cytoplasm. An accessory protein needed during the final step in the assembly of 30S ribosomal subunit, possibly for assembly of the head region. Essential for efficient processing of 16S rRNA. May be needed both before and after RbfA during the maturation of 16S rRNA. It has affinity for free ribosomal 30S subunits but not for 70S ribosomes. This is Ribosome maturation factor RimM from Symbiobacterium thermophilum (strain DSM 24528 / JCM 14929 / IAM 14863 / T).